Reading from the N-terminus, the 279-residue chain is Movement protein (279 aa).

Residues serine 255–leucine 279 are disordered. A compositionally biased stretch (polar residues) spans proline 263–leucine 279.

Belongs to the cucumovirus movement protein family.

It is found in the host cell junction. Its subcellular location is the host plasmodesma. In terms of biological role, transports viral genome to neighboring plant cells directly through plasmosdesmata, without any budding. The movement protein allows efficient cell to cell propagation, by bypassing the host cell wall barrier. Acts by forming a tubular structure at the host plasmodesmata, enlarging it enough to allow free passage of virion capsids. This Cucumis sativus (Cucumber) protein is Movement protein.